The primary structure comprises 438 residues: Enolase (438 aa).

(2R)-2-phosphoglycerate is bound at residue Gln163. The active-site Proton donor is the Glu205. Asp243, Glu292, and Asp319 together coordinate Mg(2+). (2R)-2-phosphoglycerate contacts are provided by Lys344, Arg373, Ser374, and Lys395. The active-site Proton acceptor is the Lys344.

Belongs to the enolase family. Mg(2+) serves as cofactor.

Its subcellular location is the cytoplasm. The protein localises to the secreted. It is found in the cell surface. The catalysed reaction is (2R)-2-phosphoglycerate = phosphoenolpyruvate + H2O. Its pathway is carbohydrate degradation; glycolysis; pyruvate from D-glyceraldehyde 3-phosphate: step 4/5. In terms of biological role, catalyzes the reversible conversion of 2-phosphoglycerate (2-PG) into phosphoenolpyruvate (PEP). It is essential for the degradation of carbohydrates via glycolysis. This chain is Enolase, found in Streptococcus agalactiae.